Here is a 141-residue protein sequence, read N- to C-terminus: Small ribosomal subunit protein eS12 (141 aa).

Belongs to the eukaryotic ribosomal protein eS12 family. In terms of assembly, component of the small ribosomal subunit. Mature ribosomes consist of a small (40S) and a large (60S) subunit. The 40S subunit contains about 32 different proteins and 1 molecule of RNA (18S). The 60S subunit contains about 42 different proteins and 3 molecules of RNA (28S, 5.8S and 5S).

Its subcellular location is the cytoplasm. Component of the ribosome, a large ribonucleoprotein complex responsible for the synthesis of proteins in the cell. The small ribosomal subunit (SSU) binds messenger RNAs (mRNAs) and translates the encoded message by selecting cognate aminoacyl-transfer RNA (tRNA) molecules. The large subunit (LSU) contains the ribosomal catalytic site termed the peptidyl transferase center (PTC), which catalyzes the formation of peptide bonds, thereby polymerizing the amino acids delivered by tRNAs into a polypeptide chain. The nascent polypeptides leave the ribosome through a tunnel in the LSU and interact with protein factors that function in enzymatic processing, targeting, and the membrane insertion of nascent chains at the exit of the ribosomal tunnel. This chain is Small ribosomal subunit protein eS12, found in Plasmodium falciparum (isolate 3D7).